The following is a 435-amino-acid chain: Glutamyl-tRNA reductase (435 aa).

Substrate-binding positions include 50 to 53, serine 110, 115 to 117, and glutamine 121; these read TCNR and ESQ. Residue cysteine 51 is the Nucleophile of the active site. An NADP(+)-binding site is contributed by 191–196; the sequence is GAGDMG.

It belongs to the glutamyl-tRNA reductase family. Homodimer.

It catalyses the reaction (S)-4-amino-5-oxopentanoate + tRNA(Glu) + NADP(+) = L-glutamyl-tRNA(Glu) + NADPH + H(+). It participates in porphyrin-containing compound metabolism; protoporphyrin-IX biosynthesis; 5-aminolevulinate from L-glutamyl-tRNA(Glu): step 1/2. In terms of biological role, catalyzes the NADPH-dependent reduction of glutamyl-tRNA(Glu) to glutamate 1-semialdehyde (GSA). The sequence is that of Glutamyl-tRNA reductase from Sulfurovum sp. (strain NBC37-1).